A 251-amino-acid chain; its full sequence is Large ribosomal subunit protein uL16m (251 aa).

The transit peptide at 1-29 (MWRLLTRAPAPLWRMHFSDTWAALPTSAG) directs the protein to the mitochondrion.

This sequence belongs to the universal ribosomal protein uL16 family. Component of the mitochondrial ribosome large subunit (39S) which comprises a 16S rRNA and about 50 distinct proteins.

It is found in the mitochondrion. This chain is Large ribosomal subunit protein uL16m (Mrpl16), found in Rattus norvegicus (Rat).